A 426-amino-acid polypeptide reads, in one-letter code: ATP-dependent Clp protease ATP-binding subunit ClpX (426 aa).

In terms of domain architecture, ClpX-type ZB spans 1 to 52; the sequence is MNEIKKRCSFCNKEESLDNPIINSGITPDVYICNYCLIVGSEILTGYLNKNP. Residues cysteine 8, cysteine 11, cysteine 33, and cysteine 36 each coordinate Zn(2+). 129–136 is an ATP binding site; the sequence is PTGSGKTL.

This sequence belongs to the ClpX chaperone family. Component of the ClpX-ClpP complex. Forms a hexameric ring that, in the presence of ATP, binds to fourteen ClpP subunits assembled into a disk-like structure with a central cavity, resembling the structure of eukaryotic proteasomes.

Functionally, ATP-dependent specificity component of the Clp protease. It directs the protease to specific substrates. Can perform chaperone functions in the absence of ClpP. The chain is ATP-dependent Clp protease ATP-binding subunit ClpX from Helicobacter hepaticus (strain ATCC 51449 / 3B1).